A 449-amino-acid chain; its full sequence is GPI mannosyltransferase 2 (449 aa).

The Cytoplasmic segment spans residues 1–7 (MTEKVTK). The helical transmembrane segment at 8-28 (LALASRLIVLLVQLVANGALP) threads the bilayer. Residues 29–82 (EHKPDVFRMPVSSDQNASWIDKVIKRCLGGLRHWDGEYFLHIAENLYSYENTLA) are Lumenal-facing. The N-linked (GlcNAc...) asparagine glycan is linked to Asn-44. A helical transmembrane segment spans residues 83-103 (FYPLYPVVVRHVGQAVEAIGI). Residues 104–109 (SLSQES) lie on the Cytoplasmic side of the membrane. A helical transmembrane segment spans residues 110 to 130 (ILLVVAVALNFWLFCESANLL). The Lumenal segment spans residues 131–148 (FQLTQVLFNDLNKSWNAA). Asn-142 carries an N-linked (GlcNAc...) asparagine glycan. A helical transmembrane segment spans residues 149-169 (LIYCFNPATIFFTAAYSETFF). The Cytoplasmic segment spans residues 170 to 196 (AYSSLHLMLECSKPTGSFRYLRLGTAL). A helical membrane pass occupies residues 197–217 (AACLLCRSNGLITLGYPLYFF). Residues 218-235 (GRQLLLKNKEPNTCMQLT) are Lumenal-facing. A helical transmembrane segment spans residues 236-256 (QMTLTILGAIGILHTYYFYIY). The Cytoplasmic portion of the chain corresponds to 257–368 (RLYCLPNTRP…GFKELIRDHT (112 aa)). The chain crosses the membrane as a helical span at residues 369 to 389 (TFPFVLHAAILTLVCTVYVHI). The Lumenal segment spans residues 390 to 423 (QVSTRLLASATPVFYWFAADHMPKTLAQLKLRSK). Residues 424–444 (AGALFVWCTTYSLVGTVLFSN) traverse the membrane as a helical segment. The Cytoplasmic segment spans residues 445–449 (NYPWT).

The protein belongs to the PIGV family.

It is found in the endoplasmic reticulum membrane. It participates in glycolipid biosynthesis; glycosylphosphatidylinositol-anchor biosynthesis. Mannosyltransferase involved in glycosylphosphatidylinositol-anchor biosynthesis. Transfers the second mannose to the glycosylphosphatidylinositol during GPI precursor assembly. Required for the GPI-mediated endoplasmic reticulum exit and proper targeting to the cell surface of chp. Required for GPI-mediated membrane attachment of chp, qsm and Cont. Essential for microvillar stability in the rhabdomere. The sequence is that of GPI mannosyltransferase 2 from Drosophila melanogaster (Fruit fly).